We begin with the raw amino-acid sequence, 258 residues long: Ciliogenesis and planar polarity effector 2 (258 aa).

Residues 50–258 (SIDTASYKIF…LPNPPESAPE (209 aa)) form a small GTPase-like region. Residues Ser64, Gly65, Gly67, Lys68, Thr69, Ala70, Val82, His84, Thr87, Lys176, Asp178, and Ser206 each contribute to the GTP site.

The protein belongs to the small GTPase superfamily. Rab family. In terms of assembly, interacts with FUZ. Associates with the CPLANE (ciliogenesis and planar polarity effectors) complex via its interaction with FUZ.

The protein resides in the cytoplasm. Its subcellular location is the cytoskeleton. The protein localises to the cilium basal body. It localises to the microtubule organizing center. It is found in the centrosome. The protein resides in the centriole. Functionally, required for efficient primary cilia initiation, regulating a late step in cilia initiation. Plays a role in the final maturation of the mother centriole and ciliary vesicle that allows extension of the ciliary axoneme. In Homo sapiens (Human), this protein is Ciliogenesis and planar polarity effector 2.